Here is a 635-residue protein sequence, read N- to C-terminus: Probable monoacyl phosphatidylinositol tetramannoside-binding protein LpqW (635 aa).

An N-terminal signal peptide occupies residues Met1 to Ala26. Disordered regions lie at residues Pro32–Pro52, Asn389–Glu412, and Asn511–Ala551. 2 stretches are compositionally biased toward low complexity: residues Thr390–Pro411 and Asn511–Thr531.

It belongs to the bacterial solute-binding protein 5 family.

The protein operates within phospholipid metabolism; phosphatidylinositol metabolism. In terms of biological role, may directly or indirectly regulate the accessibility of the key branch point intermediate, monoacyl phosphatidylinositol tetramannoside (AcPIM4), to the elongating alpha-1,6 mannosyltransferases which could regulate the lipoarabinomannans (LAMs) biosynthesis. The polypeptide is Probable monoacyl phosphatidylinositol tetramannoside-binding protein LpqW (lpqW) (Mycobacterium tuberculosis (strain CDC 1551 / Oshkosh)).